The sequence spans 239 residues: Glucosamine-6-phosphate deaminase (239 aa).

The active-site Proton acceptor; for enolization step is aspartate 62. Asparagine 128 serves as the catalytic For ring-opening step. Residue histidine 130 is the Proton acceptor; for ring-opening step of the active site. Catalysis depends on glutamate 135, which acts as the For ring-opening step.

Belongs to the glucosamine/galactosamine-6-phosphate isomerase family. NagB subfamily.

The enzyme catalyses alpha-D-glucosamine 6-phosphate + H2O = beta-D-fructose 6-phosphate + NH4(+). Its pathway is amino-sugar metabolism; N-acetylneuraminate degradation; D-fructose 6-phosphate from N-acetylneuraminate: step 5/5. Catalyzes the reversible isomerization-deamination of glucosamine 6-phosphate (GlcN6P) to form fructose 6-phosphate (Fru6P) and ammonium ion. The protein is Glucosamine-6-phosphate deaminase of Lactobacillus acidophilus (strain ATCC 700396 / NCK56 / N2 / NCFM).